The following is a 281-amino-acid chain: Feruloyl esterase A (281 aa).

The signal sequence occupies residues 1-21; sequence MKQFSAKYALILLATAGQALA. Cystine bridges form between Cys50/Cys279, Cys112/Cys115, and Cys248/Cys255. Asp98 lines the substrate pocket. Asn100 carries an N-linked (GlcNAc...) asparagine glycan. Tyr101 is a binding site for substrate. Ser154 functions as the Nucleophile in the catalytic mechanism. Asp215 acts as the Charge relay system in catalysis. His268 is a binding site for substrate. Residue His268 is the Charge relay system of the active site.

Glycosylated.

The protein resides in the secreted. The enzyme catalyses feruloyl-polysaccharide + H2O = ferulate + polysaccharide.. With respect to regulation, inhibited by the specific serine esterase inhibitor diisopropylfluorophosphate. In terms of biological role, involved in degradation of plant cell walls. Hydrolyzes the feruloyl-arabinose ester bond in arabinoxylans, and the feruloyl-galactose ester bond in pectin. Binds to cellulose. The protein is Feruloyl esterase A (faeA) of Aspergillus niger.